A 197-amino-acid polypeptide reads, in one-letter code: Recombination protein RecR (197 aa).

The segment at 55–70 (CVQCRDFTESEICTIC) adopts a C4-type zinc-finger fold. The region spanning 78–173 (QQLCVVESPA…RPSRLAQGMP (96 aa)) is the Toprim domain.

This sequence belongs to the RecR family.

Its function is as follows. May play a role in DNA repair. It seems to be involved in an RecBC-independent recombinational process of DNA repair. It may act with RecF and RecO. The chain is Recombination protein RecR from Xanthomonas axonopodis pv. citri (strain 306).